The chain runs to 327 residues: GMP reductase (327 aa).

Catalysis depends on Cys176, which acts as the Thioimidate intermediate. Position 205–228 (205–228) interacts with NADP(+); it reads IIADGGIRTHGDIAKSIRFGASMV.

The protein belongs to the IMPDH/GMPR family. GuaC type 2 subfamily.

It carries out the reaction IMP + NH4(+) + NADP(+) = GMP + NADPH + 2 H(+). Functionally, catalyzes the irreversible NADPH-dependent deamination of GMP to IMP. It functions in the conversion of nucleobase, nucleoside and nucleotide derivatives of G to A nucleotides, and in maintaining the intracellular balance of A and G nucleotides. The protein is GMP reductase of Streptococcus agalactiae serotype V (strain ATCC BAA-611 / 2603 V/R).